The primary structure comprises 609 residues: UvrABC system protein C (609 aa).

The region spanning 13–91 is the GIY-YIG domain; sequence HQPGVYRMFD…IKAFQPRYNV (79 aa). The UVR domain occupies 201-236; sequence QQVLEHLIKKMEQASMQLNFEQAAYFRDQIQAIRAV.

Belongs to the UvrC family. Interacts with UvrB in an incision complex.

The protein localises to the cytoplasm. In terms of biological role, the UvrABC repair system catalyzes the recognition and processing of DNA lesions. UvrC both incises the 5' and 3' sides of the lesion. The N-terminal half is responsible for the 3' incision and the C-terminal half is responsible for the 5' incision. This Histophilus somni (strain 2336) (Haemophilus somnus) protein is UvrABC system protein C.